We begin with the raw amino-acid sequence, 299 residues long: MPT51/MPB51 antigen (299 aa).

Positions 1–26 (MKGRSALLRALWIAALSFGLGGVAVA) are cleaved as a signal peptide.

This sequence belongs to the mycobacterial A85 antigen family. Homodimer.

It is found in the secreted. Functionally, may have a role in host tissue attachment, whereby ligands may include the serum protein fibronectin and small sugars. The polypeptide is MPT51/MPB51 antigen (mpt51) (Mycobacterium bovis (strain ATCC BAA-935 / AF2122/97)).